A 517-amino-acid polypeptide reads, in one-letter code: ATP synthase subunit alpha 1 (517 aa).

174–181 contributes to the ATP binding site; sequence GDRQTGKT.

It belongs to the ATPase alpha/beta chains family. As to quaternary structure, F-type ATPases have 2 components, CF(1) - the catalytic core - and CF(0) - the membrane proton channel. CF(1) has five subunits: alpha(3), beta(3), gamma(1), delta(1), epsilon(1). CF(0) has three main subunits: a(1), b(2) and c(9-12). The alpha and beta chains form an alternating ring which encloses part of the gamma chain. CF(1) is attached to CF(0) by a central stalk formed by the gamma and epsilon chains, while a peripheral stalk is formed by the delta and b chains.

The protein localises to the cell inner membrane. The enzyme catalyses ATP + H2O + 4 H(+)(in) = ADP + phosphate + 5 H(+)(out). Its function is as follows. Produces ATP from ADP in the presence of a proton gradient across the membrane. The alpha chain is a regulatory subunit. This Polaromonas naphthalenivorans (strain CJ2) protein is ATP synthase subunit alpha 1.